Consider the following 221-residue polypeptide: CASP-like protein 4C1 (221 aa).

Positions 1 to 21 are disordered; that stretch reads MDSPESSDRGLNPMTPDHGGH. The Cytoplasmic portion of the chain corresponds to 1-54; that stretch reads MDSPESSDRGLNPMTPDHGGHNGKVVHYFGQGVEGGPASPRKLGHGHLHPKANT. Residues 55-75 form a helical membrane-spanning segment; the sequence is ALLLLRLLTFAFSLASLVIMA. The Extracellular segment spans residues 76–101; that stretch reads TNSATTTATAGRHRTVNWVDFDTYRY. A helical transmembrane segment spans residues 102–122; sequence VLAACAIVCLYSFAEIGLGLW. Topologically, residues 123–144 are cytoplasmic; it reads YLLKGRMVMPESMAHWFDFGHD. A helical membrane pass occupies residues 145 to 165; sequence QGFAYLIFSACSGATAVAHNL. At 166–189 the chain is on the extracellular side; it reads RERHILIHGMYGCDEANSFCMKAE. The helical transmembrane segment at 190–210 threads the bilayer; that stretch reads ISIGLAFGAFLFIALSSLLSG. Residues 211-221 are Cytoplasmic-facing; it reads YRLVKWLILGP.

It belongs to the Casparian strip membrane proteins (CASP) family. As to quaternary structure, homodimer and heterodimers.

Its subcellular location is the cell membrane. This is CASP-like protein 4C1 from Pteridium aquilinum subsp. aquilinum (Bracken fern).